The following is a 156-amino-acid chain: uncharacterized protein (156 aa).

Residues 10–156 (VAARTFPLAC…NDYVMVRELV (147 aa)) enclose the N-acetyltransferase domain.

It belongs to the acetyltransferase family.

This is an uncharacterized protein from Mycobacterium bovis (strain ATCC BAA-935 / AF2122/97).